A 699-amino-acid chain; its full sequence is Cell pattern formation-associated protein StuA (699 aa).

Disordered stretches follow at residues 1–20 and 31–97; these read MDGT…LLAP and TPQF…QPEH. Over residues 32 to 49 the composition is skewed to low complexity; sequence PQFKSQQSQPQSQSQYPS. A compositionally biased stretch (polar residues) spans 52–61; it reads NPDSYSSSSP. The segment covering 75-84 has biased composition (acidic residues); that stretch reads EDGEDYDQEE. In terms of domain architecture, HTH APSES-type spans 226–332; sequence RVTATLWEDE…HNIGALLYHP (107 aa). Positions 260–281 form a DNA-binding region, H-T-H motif; sequence GTKLLNVAGMTRGRRDGILKSE. 3 disordered regions span residues 372-594, 599-618, and 674-699; these read AMPT…MNSM, RRDD…DLNN, and PSYP…QSFG. Residues 376–423 show a composition bias toward polar residues; that stretch reads GYTSQQPLTNGHQSMANTPQPLTNGSQPPMNGSQTPMNGPQPPMQNGG. 2 stretches are compositionally biased toward basic and acidic residues: residues 428 to 438 and 478 to 491; these read RVREDDDDLHR and GLKR…DMHR. The segment covering 520–529 has biased composition (polar residues); it reads NLHQPLSNGD. A compositionally biased stretch (basic and acidic residues) spans 535 to 545; the sequence is RGRDDDDDVHR. A compositionally biased stretch (polar residues) spans 566 to 594; it reads TSTSNDMLPQSPYYTLSNGAYQGPMMNSM. The tract at residues 669–695 is nuclear localization domain; that stretch reads TVAVSPSYPAGPGYELARPVTNVPRRQ.

Belongs to the EFG1/PHD1/stuA family.

Its subcellular location is the nucleus. Its function is as follows. Transcription factor that regulates asexual reproduction. Binds the StuA-response elements (StRE) with the consensus sequence 5'-(A/T)CGCG(T/A)N(A/C)-3' at the promoters of target genes. Controls the expression of the gene clusters involved in the production of deoxynivalenol (DON) and 15-acetyldeoxynivalenol (15ADON). Regulates the expression of genes involved in chitin and glucan metabolism. Also controls catalase activity and cell surface hydrophobicity. Plays an important role in pathogenicity. In Gibberella zeae (strain ATCC MYA-4620 / CBS 123657 / FGSC 9075 / NRRL 31084 / PH-1) (Wheat head blight fungus), this protein is Cell pattern formation-associated protein StuA.